Consider the following 329-residue polypeptide: Methionyl-tRNA formyltransferase (329 aa).

118–121 provides a ligand contact to (6S)-5,6,7,8-tetrahydrofolate; sequence SLLP.

It belongs to the Fmt family.

The catalysed reaction is L-methionyl-tRNA(fMet) + (6R)-10-formyltetrahydrofolate = N-formyl-L-methionyl-tRNA(fMet) + (6S)-5,6,7,8-tetrahydrofolate + H(+). Attaches a formyl group to the free amino group of methionyl-tRNA(fMet). The formyl group appears to play a dual role in the initiator identity of N-formylmethionyl-tRNA by promoting its recognition by IF2 and preventing the misappropriation of this tRNA by the elongation apparatus. The polypeptide is Methionyl-tRNA formyltransferase (Corynebacterium urealyticum (strain ATCC 43042 / DSM 7109)).